The chain runs to 165 residues: Cytochrome c-type biogenesis protein CcmE (165 aa).

Over 1–7 the chain is Cytoplasmic; it reads MTRKQRR. The helical; Signal-anchor for type II membrane protein transmembrane segment at 8–28 threads the bilayer; the sequence is LMMIGGAGVVLVVAVGLVLNA. Topologically, residues 29–165 are periplasmic; the sequence is MRGSIVFFST…ASADAMRPAR (137 aa). The heme site is built by histidine 122 and tyrosine 126. Over residues 138 to 149 the composition is skewed to basic and acidic residues; it reads QGHWKDDYEKKP. Residues 138-165 form a disordered region; that stretch reads QGHWKDDYEKKPPGPGAAASADAMRPAR. A compositionally biased stretch (low complexity) spans 153-165; that stretch reads GAAASADAMRPAR.

It belongs to the CcmE/CycJ family.

Its subcellular location is the cell inner membrane. In terms of biological role, heme chaperone required for the biogenesis of c-type cytochromes. Transiently binds heme delivered by CcmC and transfers the heme to apo-cytochromes in a process facilitated by CcmF and CcmH. The protein is Cytochrome c-type biogenesis protein CcmE of Rhodopseudomonas palustris (strain HaA2).